Consider the following 117-residue polypeptide: Toxin CSTX-12 (117 aa).

A signal peptide spans 1 to 20; it reads MKVLVICAVLFLTIFSNSSA. A propeptide spanning residues 21-47 is cleaved from the precursor; that stretch reads ETEDDFLEDESFEADDVIPFLAREQVR. Disulfide bonds link Cys50–Cys65, Cys57–Cys74, Cys64–Cys95, and Cys76–Cys93. The propeptide occupies 82–87; sequence RSDTAR. Ala116 carries the post-translational modification Alanine amide.

The protein belongs to the neurotoxin 19 (CSTX) family. 12 subfamily. In terms of assembly, heterodimer of A and B chains; disulfide-linked. Interacts with CSTX-1 (AC P81694), and with CSTX-9 (AC P58604). In terms of tissue distribution, expressed by the venom gland.

It localises to the secreted. Its subcellular location is the target cell membrane. Functionally, synergistic toxin that induces or increases a cytolytic effect when combined with CSTX-1 (AC P81694) or CSTX-9 (AC P58604). When alone, has a weak insecticidal activity, with an unknown molecular target. The protein is Toxin CSTX-12 of Cupiennius salei (American wandering spider).